The sequence spans 484 residues: Putative myrosinase 6 (484 aa).

N28 carries N-linked (GlcNAc...) asparagine glycosylation. Residues Q39, H140, and 184 to 185 contribute to the a beta-D-glucoside site; that span reads NQ. Cysteines 204 and 207 form a disulfide. N260 is a glycosylation site (N-linked (GlcNAc...) asparagine). A beta-D-glucoside-binding positions include Y321, W440, 447 to 448, and F456; that span reads EF. N462 carries an N-linked (GlcNAc...) asparagine glycan.

This sequence belongs to the glycosyl hydrolase 1 family.

It carries out the reaction a thioglucoside + H2O = a sugar + a thiol.. In Arabidopsis thaliana (Mouse-ear cress), this protein is Putative myrosinase 6.